The following is a 488-amino-acid chain: Probable glycine dehydrogenase (decarboxylating) subunit 2 (488 aa).

Lys274 is modified (N6-(pyridoxal phosphate)lysine).

Belongs to the GcvP family. C-terminal subunit subfamily. The glycine cleavage system is composed of four proteins: P, T, L and H. In this organism, the P 'protein' is a heterodimer of two subunits. Requires pyridoxal 5'-phosphate as cofactor.

The enzyme catalyses N(6)-[(R)-lipoyl]-L-lysyl-[glycine-cleavage complex H protein] + glycine + H(+) = N(6)-[(R)-S(8)-aminomethyldihydrolipoyl]-L-lysyl-[glycine-cleavage complex H protein] + CO2. Its function is as follows. The glycine cleavage system catalyzes the degradation of glycine. The P protein binds the alpha-amino group of glycine through its pyridoxal phosphate cofactor; CO(2) is released and the remaining methylamine moiety is then transferred to the lipoamide cofactor of the H protein. The protein is Probable glycine dehydrogenase (decarboxylating) subunit 2 of Listeria monocytogenes serotype 4a (strain HCC23).